A 479-amino-acid chain; its full sequence is Adenosylhomocysteinase (479 aa).

Residues threonine 65, aspartate 144, and glutamate 204 each coordinate substrate. 205 to 207 (TTT) contributes to the NAD(+) binding site. Substrate is bound by residues lysine 234 and aspartate 238. Residues asparagine 239, 268–273 (GYGDVG), glutamate 291, asparagine 326, 347–349 (IGH), and asparagine 392 each bind NAD(+).

Belongs to the adenosylhomocysteinase family. NAD(+) serves as cofactor.

The protein resides in the cytoplasm. The enzyme catalyses S-adenosyl-L-homocysteine + H2O = L-homocysteine + adenosine. It participates in amino-acid biosynthesis; L-homocysteine biosynthesis; L-homocysteine from S-adenosyl-L-homocysteine: step 1/1. Functionally, may play a key role in the regulation of the intracellular concentration of adenosylhomocysteine. The sequence is that of Adenosylhomocysteinase from Variovorax paradoxus (strain S110).